We begin with the raw amino-acid sequence, 321 residues long: o-succinylbenzoate synthase (321 aa).

The active-site Proton donor is the lysine 134. Positions 162, 191, and 214 each coordinate Mg(2+). The active-site Proton acceptor is lysine 236.

It belongs to the mandelate racemase/muconate lactonizing enzyme family. MenC type 1 subfamily. It depends on a divalent metal cation as a cofactor.

It carries out the reaction (1R,6R)-6-hydroxy-2-succinyl-cyclohexa-2,4-diene-1-carboxylate = 2-succinylbenzoate + H2O. It functions in the pathway quinol/quinone metabolism; 1,4-dihydroxy-2-naphthoate biosynthesis; 1,4-dihydroxy-2-naphthoate from chorismate: step 4/7. Its pathway is quinol/quinone metabolism; menaquinone biosynthesis. Its function is as follows. Converts 2-succinyl-6-hydroxy-2,4-cyclohexadiene-1-carboxylate (SHCHC) to 2-succinylbenzoate (OSB). This chain is o-succinylbenzoate synthase, found in Enterobacter sp. (strain 638).